The sequence spans 1295 residues: Phosphoribosylformylglycinamidine synthase (1295 aa).

Residues tryptophan 305–lysine 327 are disordered. Residues glycine 307–aspartate 318 and alanine 678 contribute to the ATP site. Residues glutamate 718, asparagine 722, and aspartate 884 each coordinate Mg(2+). Residue serine 886 participates in ATP binding. One can recognise a Glutamine amidotransferase type-1 domain in the interval valine 1042–glycine 1295. The active-site Nucleophile is cysteine 1135. Catalysis depends on residues histidine 1260 and glutamate 1262.

The protein in the N-terminal section; belongs to the FGAMS family. As to quaternary structure, monomer.

It localises to the cytoplasm. The enzyme catalyses N(2)-formyl-N(1)-(5-phospho-beta-D-ribosyl)glycinamide + L-glutamine + ATP + H2O = 2-formamido-N(1)-(5-O-phospho-beta-D-ribosyl)acetamidine + L-glutamate + ADP + phosphate + H(+). It participates in purine metabolism; IMP biosynthesis via de novo pathway; 5-amino-1-(5-phospho-D-ribosyl)imidazole from N(2)-formyl-N(1)-(5-phospho-D-ribosyl)glycinamide: step 1/2. Functionally, phosphoribosylformylglycinamidine synthase involved in the purines biosynthetic pathway. Catalyzes the ATP-dependent conversion of formylglycinamide ribonucleotide (FGAR) and glutamine to yield formylglycinamidine ribonucleotide (FGAM) and glutamate. The protein is Phosphoribosylformylglycinamidine synthase of Escherichia coli O6:K15:H31 (strain 536 / UPEC).